The following is a 163-amino-acid chain: Calmodulin (163 aa).

Position 2 is an N-acetylalanine (alanine 2). EF-hand domains lie at 11–46 (EQIA…LGQN), 47–82 (PTEA…KMKE), 84–119 (DHED…LGEK), and 120–155 (LSEE…GATD). Positions 24, 26, 28, 30, 35, 60, 62, 64, 66, 71, 97, 99, 101, 108, 133, 135, 137, 139, and 144 each coordinate Ca(2+).

It belongs to the calmodulin family. As to quaternary structure, associates with the spoke-associated complex containing CFAP61, CFAP91 and CFAP251; the association is calcium sensitive. In terms of processing, trimethylation of Lys-119 observed in other calmodulins is absent here.

The protein resides in the cytoplasm. Its subcellular location is the cytoskeleton. It localises to the flagellum axoneme. Functionally, calmodulin mediates the control of a large number of enzymes, ion channels and other proteins by Ca(2+). Among the enzymes to be stimulated by the calmodulin-Ca(2+) complex are a number of protein kinases and phosphatases. In Chlamydomonas reinhardtii (Chlamydomonas smithii), this protein is Calmodulin.